A 547-amino-acid polypeptide reads, in one-letter code: Chaperonin GroEL (547 aa).

Residues 30-33 (TLGP), Lys-51, 87-91 (DGTTT), Gly-415, and Asp-495 each bind ATP.

It belongs to the chaperonin (HSP60) family. In terms of assembly, forms a cylinder of 14 subunits composed of two heptameric rings stacked back-to-back. Interacts with the co-chaperonin GroES.

Its subcellular location is the cytoplasm. It carries out the reaction ATP + H2O + a folded polypeptide = ADP + phosphate + an unfolded polypeptide.. In terms of biological role, together with its co-chaperonin GroES, plays an essential role in assisting protein folding. The GroEL-GroES system forms a nano-cage that allows encapsulation of the non-native substrate proteins and provides a physical environment optimized to promote and accelerate protein folding. The chain is Chaperonin GroEL from Ralstonia nicotianae (strain ATCC BAA-1114 / GMI1000) (Ralstonia solanacearum).